Reading from the N-terminus, the 198-residue chain is Glycerol-3-phosphate acyltransferase (198 aa).

A run of 5 helical transmembrane segments spans residues 2-22 (FITYLLLIVAYLLGSIPFALV), 53-75 (AGFIVTIADILKGTLATGLPLIF), 79-98 (IHPLLFGLAAVLGHVYPIFA), 113-133 (LLCYAPIIFAILAVVFFTLLF), and 147-167 (IAAVIASIVNGDKIFIVAMCL).

This sequence belongs to the PlsY family. As to quaternary structure, probably interacts with PlsX.

The protein resides in the cell membrane. It carries out the reaction an acyl phosphate + sn-glycerol 3-phosphate = a 1-acyl-sn-glycero-3-phosphate + phosphate. Its pathway is lipid metabolism; phospholipid metabolism. Functionally, catalyzes the transfer of an acyl group from acyl-phosphate (acyl-PO(4)) to glycerol-3-phosphate (G3P) to form lysophosphatidic acid (LPA). This enzyme utilizes acyl-phosphate as fatty acyl donor, but not acyl-CoA or acyl-ACP. The protein is Glycerol-3-phosphate acyltransferase of Bacillus cytotoxicus (strain DSM 22905 / CIP 110041 / 391-98 / NVH 391-98).